The primary structure comprises 2513 residues: Highly reducing polyketide synthase ACRTS2 (2513 aa).

The Ketosynthase family 3 (KS3) domain maps to 4-429; that stretch reads DTPVAIIGVS…GSSSAVIIDR (426 aa). Catalysis depends on for beta-ketoacyl synthase activity residues C174, H313, and H353. The interval 547–875 is malonyl-CoA:ACP transacylase (MAT) domain; that stretch reads VFTGQGAQYA…NYLPSLLRGT (329 aa). S635 acts as the For malonyltransferase activity in catalysis. Positions 942–1074 are N-terminal hotdog fold; it reads HALIGRKAPS…GKIEPEIADL (133 aa). A dehydratase (DH) domain region spans residues 942–1253; that stretch reads HALIGRKAPS…TFRTVSSADD (312 aa). The region spanning 942–1254 is the PKS/mFAS DH domain; that stretch reads HALIGRKAPS…FRTVSSADDQ (313 aa). Residue H974 is the Proton acceptor; for dehydratase activity of the active site. Residues 1092–1254 form a C-terminal hotdog fold region; it reads AGVIEHDMDN…FRTVSSADDQ (163 aa). The active-site Proton donor; for dehydratase activity is D1161. The methyltransferase (CMet) domain stretch occupies residues 1407 to 1600; sequence SKIIGYLTEN…IPTNYRTDNP (194 aa). The segment at 1816–2127 is enoylreductase (ER) domain; the sequence is GSPDTIYFRR…SRDHIGRLVV (312 aa). Positions 2152 to 2327 are ketoreductase (KR) domain; sequence ATYLVAGGTR…YTVSIGLPVV (176 aa). The Carrier domain occupies 2433–2510; the sequence is DPLTGLIEAL…ALAVNILAQR (78 aa). S2470 carries the post-translational modification O-(pantetheine 4'-phosphoryl)serine.

The protein operates within mycotoxin biosynthesis. Highly reducing polyketide synthase; part of the gene cluster that mediates the biosynthesis of the host-selective toxins (HSTs) ACR-toxins responsible for brown spot of rough lemon disease by the rough lemon pathotype. ACR-toxins cause uncoupling of mitochondrial oxidative-phosphorylation similar to that of classic protonophore. The structure of the major form of ACR-toxin (ACR-toxin I) consists of an alpha-dihydropyrone ring in a 19-carbon polyalcohol, a typical polyketide structure. Minor toxins were characterized as having a pyrone ring with polyalcohol side chains different in length and showing weaker toxicity. The highly reducing polyketide synthase ACRTS2 has all necessary enzymatic domains for multiple cycles of condensation and beta-keto processing. The cytochrome P450 monooxygenase ACRTS1 has also been shown to be essential for ACR-toxin biosynthesis, however its exact role in the pathway has not been elucidated yet. The sequence is that of Highly reducing polyketide synthase ACRTS2 from Alternaria alternata (Alternaria rot fungus).